Reading from the N-terminus, the 278-residue chain is Malonyl-[acyl-carrier protein] O-methyltransferase (278 aa).

Belongs to the methyltransferase superfamily.

The catalysed reaction is malonyl-[ACP] + S-adenosyl-L-methionine = malonyl-[ACP] methyl ester + S-adenosyl-L-homocysteine. The protein operates within cofactor biosynthesis; biotin biosynthesis. Converts the free carboxyl group of a malonyl-thioester to its methyl ester by transfer of a methyl group from S-adenosyl-L-methionine (SAM). It allows to synthesize pimeloyl-ACP via the fatty acid synthetic pathway. This is Malonyl-[acyl-carrier protein] O-methyltransferase from Brevibacillus brevis (strain 47 / JCM 6285 / NBRC 100599).